The primary structure comprises 182 residues: Mid1-interacting protein 1 (182 aa).

Position 1 is an N-acetylmethionine (methionine 1). The segment at 55 to 75 (VGGSGGCLEERTTPAPSPGSA) is disordered. Serine 71, serine 74, and serine 78 each carry phosphoserine.

The protein belongs to the SPOT14 family. In terms of assembly, homodimer in the absence of THRSP. Heterodimer with THRSP. The homodimer interacts with ACACA and ACACB. Promotes polymerization of Acetyl-CoA carboxylase to form complexes that contain MID1IP1 and ACACA and/or ACACB. Interaction with THRSP interferes with ACACA binding. In terms of tissue distribution, during embryonic development, expressed mainly in the neuroepithelial midline, urogenital apparatus and digits. Detected in adult white fat, liver, heart, brain and kidney. Expressed at very low levels in lactating mammary gland.

It localises to the nucleus. It is found in the cytoplasm. The protein localises to the cytoskeleton. Functionally, plays a role in the regulation of lipogenesis in liver. Up-regulates ACACA enzyme activity. Required for efficient lipid biosynthesis, including triacylglycerol, diacylglycerol and phospholipid. Involved in stabilization of microtubules. The sequence is that of Mid1-interacting protein 1 (Mid1ip1) from Mus musculus (Mouse).